The primary structure comprises 149 residues: Putative pre-16S rRNA nuclease (149 aa).

This sequence belongs to the YqgF nuclease family.

It localises to the cytoplasm. Could be a nuclease involved in processing of the 5'-end of pre-16S rRNA. The sequence is that of Putative pre-16S rRNA nuclease from Synechococcus elongatus (strain ATCC 33912 / PCC 7942 / FACHB-805) (Anacystis nidulans R2).